A 300-amino-acid chain; its full sequence is Probable protein phosphatase 2C 3 (300 aa).

In terms of domain architecture, PPM-type phosphatase spans 23-298 (IFAASEMQGW…DNMTTILVYL (276 aa)). 4 residues coordinate Mn(2+): Asp-57, Gly-58, Asp-237, and Asp-289.

This sequence belongs to the PP2C family. Requires Mg(2+) as cofactor. It depends on Mn(2+) as a cofactor.

It is found in the membrane. It catalyses the reaction O-phospho-L-seryl-[protein] + H2O = L-seryl-[protein] + phosphate. It carries out the reaction O-phospho-L-threonyl-[protein] + H2O = L-threonyl-[protein] + phosphate. Functionally, enzyme with a broad specificity. In Paramecium tetraurelia, this protein is Probable protein phosphatase 2C 3.